Reading from the N-terminus, the 387-residue chain is MHCAILKAEAVDGAHLMQIFWHDGAESLYPAVWLRDNCQCSDCYLHSAKARKLLLEALDVNIRIDDLTFDRKKVYITWPNDHYSEFEANWLKKRCFSQQARARLQGELFLPECQYWGSELQLPTLNFEDVLNDDDHAYKWLSSLKKVGIVRLTGAADKRGEIIKLGKRIGFLYLTFYGHTWQVQDKIDANNVAYTTGKLSFHTDYPALHHPPGVQLLHCIKQTVTGGDSEIVDGFNVCQKLKEKNPQAFHILSSTFVDFTDIGVDYCDFSVQSKHKIIELDDKGQVVRVNFNNATRDTVFDVPIERVQPFYAALKEFVDLMNSKEYKYTFKMNPGDVITFDNWRLLHGRRSYEAGTEISRHLEGAYADWDVVMSRLRILRQRVTNGN.

Zn(2+) contacts are provided by Cys38, Cys40, Cys43, and His82. Residues His202, Asp204, and His347 each coordinate Fe cation. Ser351 carries the phosphoserine modification.

It belongs to the gamma-BBH/TMLD family. Fe(2+) serves as cofactor. L-ascorbate is required as a cofactor.

Its subcellular location is the cytoplasm. It catalyses the reaction 4-(trimethylamino)butanoate + 2-oxoglutarate + O2 = carnitine + succinate + CO2. The protein operates within amine and polyamine biosynthesis; carnitine biosynthesis. In terms of biological role, catalyzes the formation of L-carnitine from gamma-butyrobetaine. The sequence is that of Gamma-butyrobetaine dioxygenase (Bbox1) from Mus musculus (Mouse).